The chain runs to 104 residues: Large ribosomal subunit protein uL24 (104 aa).

It belongs to the universal ribosomal protein uL24 family. In terms of assembly, part of the 50S ribosomal subunit.

Its function is as follows. One of two assembly initiator proteins, it binds directly to the 5'-end of the 23S rRNA, where it nucleates assembly of the 50S subunit. One of the proteins that surrounds the polypeptide exit tunnel on the outside of the subunit. The protein is Large ribosomal subunit protein uL24 of Shewanella sediminis (strain HAW-EB3).